The chain runs to 235 residues: Sugar fermentation stimulation protein homolog (235 aa).

It belongs to the SfsA family.

The chain is Sugar fermentation stimulation protein homolog from Bartonella henselae (strain ATCC 49882 / DSM 28221 / CCUG 30454 / Houston 1) (Rochalimaea henselae).